Consider the following 715-residue polypeptide: Photosystem I P700 chlorophyll a apoprotein A1 (715 aa).

A run of 8 helical transmembrane segments spans residues 60–83 (VFSA…FHGA), 146–169 (LYST…FHYH), 185–209 (LNHH…HVSL), 281–299 (TVHH…GHMY), 336–359 (WHAQ…HHMY), 375–401 (LSLF…IFMV), 423–445 (AIIS…LYIH), and 521–539 (FLVH…LILL). The [4Fe-4S] cluster site is built by C563 and C572. The next 2 membrane-spanning stretches (helical) occupy residues 579–600 (HVFL…HFSW) and 654–676 (LSAY…MFLF). H665 serves as a coordination point for chlorophyll a'. Positions 673 and 681 each coordinate chlorophyll a. W682 contributes to the phylloquinone binding site. A helical transmembrane segment spans residues 714-715 (AE).

It belongs to the PsaA/PsaB family. In terms of assembly, the PsaA/B heterodimer binds the P700 chlorophyll special pair and subsequent electron acceptors. PSI consists of a core antenna complex that captures photons, and an electron transfer chain that converts photonic excitation into a charge separation. The eukaryotic PSI reaction center is composed of at least 11 subunits. P700 is a chlorophyll a/chlorophyll a' dimer, A0 is one or more chlorophyll a, A1 is one or both phylloquinones and FX is a shared 4Fe-4S iron-sulfur center. is required as a cofactor.

Its subcellular location is the plastid. It localises to the chloroplast thylakoid membrane. It catalyses the reaction reduced [plastocyanin] + hnu + oxidized [2Fe-2S]-[ferredoxin] = oxidized [plastocyanin] + reduced [2Fe-2S]-[ferredoxin]. Its function is as follows. PsaA and PsaB bind P700, the primary electron donor of photosystem I (PSI), as well as the electron acceptors A0, A1 and FX. PSI is a plastocyanin-ferredoxin oxidoreductase, converting photonic excitation into a charge separation, which transfers an electron from the donor P700 chlorophyll pair to the spectroscopically characterized acceptors A0, A1, FX, FA and FB in turn. Oxidized P700 is reduced on the lumenal side of the thylakoid membrane by plastocyanin. The chain is Photosystem I P700 chlorophyll a apoprotein A1 from Phlegmariurus squarrosus (Rock tassel fern).